The following is a 530-amino-acid chain: Probable phosphoacetylglucosamine mutase (530 aa).

The Phosphoserine intermediate role is filled by Ser-62. 4 residues coordinate Mg(2+): Ser-62, Asp-278, Asp-280, and Asp-282. Substrate is bound by residues 369–371, 481–485, and Arg-490; these read EPN and RPSGT.

This sequence belongs to the phosphohexose mutase family. Mg(2+) is required as a cofactor.

It carries out the reaction N-acetyl-alpha-D-glucosamine 1-phosphate = N-acetyl-D-glucosamine 6-phosphate. It functions in the pathway nucleotide-sugar biosynthesis; UDP-N-acetyl-alpha-D-glucosamine biosynthesis; N-acetyl-alpha-D-glucosamine 1-phosphate from alpha-D-glucosamine 6-phosphate (route I): step 2/2. Catalyzes the conversion of GlcNAc-6-P into GlcNAc-1-P during the synthesis of uridine diphosphate/UDP-GlcNAc, which is a biosynthetic precursor of chitin and also supplies the amino sugars for N-linked oligosaccharides of glycoproteins. The sequence is that of Probable phosphoacetylglucosamine mutase from Encephalitozoon cuniculi (strain GB-M1) (Microsporidian parasite).